The following is a 340-amino-acid chain: Anthranilate phosphoribosyltransferase (340 aa).

5-phospho-alpha-D-ribose 1-diphosphate contacts are provided by residues glycine 81, 84-85 (GD), threonine 89, 91-94 (NIST), 109-117 (KHGNRGATS), and serine 121. Position 81 (glycine 81) interacts with anthranilate. Serine 93 is a Mg(2+) binding site. Asparagine 112 provides a ligand contact to anthranilate. Arginine 167 contacts anthranilate. Mg(2+)-binding residues include aspartate 225 and glutamate 226.

It belongs to the anthranilate phosphoribosyltransferase family. As to quaternary structure, homodimer. Mg(2+) is required as a cofactor.

It catalyses the reaction N-(5-phospho-beta-D-ribosyl)anthranilate + diphosphate = 5-phospho-alpha-D-ribose 1-diphosphate + anthranilate. It functions in the pathway amino-acid biosynthesis; L-tryptophan biosynthesis; L-tryptophan from chorismate: step 2/5. In terms of biological role, catalyzes the transfer of the phosphoribosyl group of 5-phosphorylribose-1-pyrophosphate (PRPP) to anthranilate to yield N-(5'-phosphoribosyl)-anthranilate (PRA). In Methanocorpusculum labreanum (strain ATCC 43576 / DSM 4855 / Z), this protein is Anthranilate phosphoribosyltransferase.